The chain runs to 291 residues: Homoserine kinase (291 aa).

An ATP-binding site is contributed by 80 to 90; it reads RPASGLGSSAA.

Belongs to the GHMP kinase family. Homoserine kinase subfamily.

It localises to the cytoplasm. The enzyme catalyses L-homoserine + ATP = O-phospho-L-homoserine + ADP + H(+). The protein operates within amino-acid biosynthesis; L-threonine biosynthesis; L-threonine from L-aspartate: step 4/5. Functionally, catalyzes the ATP-dependent phosphorylation of L-homoserine to L-homoserine phosphate. The chain is Homoserine kinase from Natronomonas pharaonis (strain ATCC 35678 / DSM 2160 / CIP 103997 / JCM 8858 / NBRC 14720 / NCIMB 2260 / Gabara) (Halobacterium pharaonis).